The chain runs to 422 residues: Inner membrane ALBINO3-like protein 2, chloroplastic (422 aa).

Residues 1 to 10 (MALQMKQSPS) are compositionally biased toward polar residues. The interval 1–22 (MALQMKQSPSMGVRRASQPVLP) is disordered. The helical transmembrane segment at 65–85 (LYTLAEGGPIDVLAQFFEFVL) threads the bilayer. Topologically, residues 86 to 96 (QTLDEGLESAK) are stromal. The chain crosses the membrane as a helical span at residues 97–117 (IPYSYGFAIIALTVLVKVATF). Topologically, residues 118–166 (PLTQKQVESTLSLQALQPRVKELQAKYADDPENLQLETARLYKEAGVNP) are lumenal. The helical transmembrane segment at 167-187 (LAGCFPTLATIPVFIGLYNAL) threads the bilayer. Residues 188–225 (SNAAKEGLLTEGFFWIPSLGGPTTIGGGLEWLVPFENG) are Stromal-facing. Residues 226 to 246 (APPVGWANAAAYLVMPVLLVA) traverse the membrane as a helical segment. Topologically, residues 247 to 275 (SQYASQKIISSQNNQDPSQQQAQAILKFL) are lumenal. The helical transmembrane segment at 276-296 (PLMIGWFSLNVPSGLTLYWFV) threads the bilayer. The Stromal portion of the chain corresponds to 297–422 (NNLLSTGQQL…GSEEGKDNSA (126 aa)). Residues 325–422 (TAGSSTPIVK…GSEEGKDNSA (98 aa)) are disordered. Positions 334–350 (KPKEERVKKVTGKELGS) are enriched in basic and acidic residues. The span at 358-367 (DGEEVEDVEV) shows a compositional bias: acidic residues. Low complexity predominate over residues 368–380 (EVVSSGSSSSSGS). Positions 386-400 (RKGEKFRALKAREAA) are enriched in basic and acidic residues.

The protein belongs to the OXA1/ALB3/YidC (TC 2.A.9.2) family.

It is found in the plastid. It localises to the chloroplast thylakoid membrane. Required for the insertion of some light-harvesting complexes (LHC) proteins into the chloroplast thylakoid membrane. Essential for the assembly and activity of LHC I and II. Its function is probably partly distinct from that of ALB3.1. The sequence is that of Inner membrane ALBINO3-like protein 2, chloroplastic (ALB3.2) from Chlamydomonas reinhardtii (Chlamydomonas smithii).